A 435-amino-acid polypeptide reads, in one-letter code: Manganese transport system membrane protein MntC (435 aa).

Transmembrane regions (helical) follow at residues 17–37 (VLAGTLLLGTASGVLGSFVLL), 42–62 (LIGDAMAHSALPGVCLAFLFT), 68–88 (PFFLLGAALAGLLGTFCIQLI), 98–118 (SAIGIVLSVFFGVGIILLTYI), 143–163 (QDIILIAGISAVLLLLCIVFF), 166–186 (FTLITFDLAFAKGLGIPVRFL), 189–209 (LLACLIVCAVVIGLQTVGVIL), 228–248 (LTGMIIIAGITGGVSGVAGTL), and 255–275 (GMATGPLMILSATLLFLFSMI).

Belongs to the ABC-3 integral membrane protein family. As to quaternary structure, the complex is probably composed of two ATP-binding proteins (MntB), two transmembrane proteins (MntC and MntD) and a solute-binding protein (MntA).

The protein resides in the cell membrane. In terms of biological role, probably part of the ABC transporter complex MntABCD involved in manganese import. Probably responsible for the translocation of the substrate across the membrane. This Bacillus subtilis (strain 168) protein is Manganese transport system membrane protein MntC.